The sequence spans 724 residues: MVMQEEKKRQQPVTRRVRSFSESFKNLFRPPRSRDSSPINVTRIPYRSSSTSPKRSSEPPRRSTVSAQILDPKNSPIRQRSYTLKCCTPGLSHPFRQTGSGASNSPTRHRSISGEEQEIVNSLPEYKRSASHTFHGIRRPRSRSSSVSSCDSSNGTTSSSDSQWAMDSLLDDSDNDLTPYRGSNKDILKSKDRAPYNYIDDYNKKALRRATSYPNPLPSKQFYNERLYTRRSHPDEESLESLPRSAGADVQCIIEQNGFKVYEDGSHEHNIKLSGVIAKLEKGNSLPVHRQGLLSRPRLGITLSGLFKHHKNECDIENASSLLPNVEKSQTNHEKRTGQSPNDSNRSSPTQGREDYLKIVNPDASLGSDELKLINSLSSRIHKSLQNYLQEKNLKPAECIGEQAPTFQDNYGHPVGLVGAGAYGEVKLCARLRNEKDSPPFETYHDSKYIYYAVKELKPKPDSDLEKFCTKITSEFIIGHSLSHYHKNGKKPAPNILNVFDILEDSSSFIEVMEFCPAGDLYGMLVGKSKLKGRLHPLEADCFMKQLLHGVKFMHDHGIAHCDLKPENILFYPHGLLKICDFGTSSVFQTAWERRVHAQKGIIGSEPYVAPEEFVDGEYYDPRLIDCWSCGVVYITMILGHHLWKVASREKDMSYDEFYKEMQRKNQFRVFEELKHVNSELATNRKIALYRIFQWEPRKRISVGKLLDMQWMKSTNCCLIYDST.

2 disordered regions span residues 1–81 (MVMQ…RQRS) and 93–188 (HPFR…KDIL). Ser-19 bears the Phosphoserine mark. Residues 45–54 (PYRSSSTSPK) show a composition bias toward low complexity. The span at 95-106 (FRQTGSGASNSP) shows a compositional bias: polar residues. Positions 143–162 (RSSSVSSCDSSNGTTSSSDS) are enriched in low complexity. A phosphoserine mark is found at Ser-232, Ser-238, and Ser-241. 2 stretches are compositionally biased toward polar residues: residues 318–329 (NASSLLPNVEKS) and 338–351 (GQSP…SPTQ). A disordered region spans residues 318-355 (NASSLLPNVEKSQTNHEKRTGQSPNDSNRSSPTQGRED). A Protein kinase domain is found at 412-712 (GHPVGLVGAG…VGKLLDMQWM (301 aa)). Residues 418–426 (VGAGAYGEV) and Lys-455 contribute to the ATP site. Asp-563 functions as the Proton acceptor in the catalytic mechanism.

This sequence belongs to the protein kinase superfamily. CAMK Ser/Thr protein kinase family. NPR/HAL subfamily. HAL5 sub-subfamily.

It is found in the cytoplasm. It catalyses the reaction L-seryl-[protein] + ATP = O-phospho-L-seryl-[protein] + ADP + H(+). It carries out the reaction L-threonyl-[protein] + ATP = O-phospho-L-threonyl-[protein] + ADP + H(+). The polypeptide is Probable serine/threonine-protein kinase KKQ8 (KKQ8) (Saccharomyces cerevisiae (strain YJM789) (Baker's yeast)).